Here is a 503-residue protein sequence, read N- to C-terminus: Lactation elevated protein 1 homolog B (503 aa).

Residues 108 to 155 (LQNQPTSELQDKVGSRETVNICRPDENVSNEKEDQQEESSKPHPPQGY) form a disordered region. Positions 130–148 (RPDENVSNEKEDQQEESSK) are enriched in basic and acidic residues. 159-166 (GNVGTGKT) is an ATP binding site.

This sequence belongs to the AFG1 ATPase family.

The polypeptide is Lactation elevated protein 1 homolog B (lace1b) (Danio rerio (Zebrafish)).